The following is a 367-amino-acid chain: Ferrochelatase (367 aa).

Positions 226 and 307 each coordinate Fe cation.

Belongs to the ferrochelatase family.

Its subcellular location is the cytoplasm. It catalyses the reaction heme b + 2 H(+) = protoporphyrin IX + Fe(2+). Its pathway is porphyrin-containing compound metabolism; protoheme biosynthesis; protoheme from protoporphyrin-IX: step 1/1. Its function is as follows. Catalyzes the ferrous insertion into protoporphyrin IX. This is Ferrochelatase from Burkholderia pseudomallei (strain 668).